The chain runs to 28 residues: Chaperonin GroEL (28 aa).

This sequence belongs to the chaperonin (HSP60) family. In terms of assembly, forms a cylinder of 14 subunits composed of two heptameric rings stacked back-to-back. Interacts with the co-chaperonin GroES.

The protein resides in the cytoplasm. It carries out the reaction ATP + H2O + a folded polypeptide = ADP + phosphate + an unfolded polypeptide.. Functionally, together with its co-chaperonin GroES, plays an essential role in assisting protein folding. The GroEL-GroES system forms a nano-cage that allows encapsulation of the non-native substrate proteins and provides a physical environment optimized to promote and accelerate protein folding. In Mycolicibacterium smegmatis (Mycobacterium smegmatis), this protein is Chaperonin GroEL.